The chain runs to 348 residues: PDZ and LIM domain protein 2 (348 aa).

The PDZ domain maps to 1-84 (MALTVDVVGP…PLRLQLDRPQ (84 aa)). Positions 67-139 (SKIRQSPSPL…PPTSPQAPTG (73 aa)) are disordered. Polar residues predominate over residues 103–118 (RFQSSRRTHTDSQASL). Phosphoserine is present on residues Ser-117, Ser-119, and Ser-124. Residues Thr-128 and Thr-132 each carry the phosphothreonine modification. Phosphoserine is present on residues Ser-133, Ser-153, Ser-191, Ser-197, Ser-198, Ser-202, Ser-209, and Ser-262. A disordered region spans residues 165-202 (GGRRGSRQASLSPAGDSAVLVLPPPPSPGARSSSSRLS). Residues 193-202 (GARSSSSRLS) show a composition bias toward low complexity. Residues 249 to 275 (ERGGTPAYLPSSLSPQSSLPTSRALAS) form a disordered region. Residues 257–270 (LPSSLSPQSSLPTS) show a composition bias toward low complexity. Residues 280-340 (HTCEKCNTSI…EKHARQRYSA (61 aa)) enclose the LIM zinc-binding domain.

In terms of assembly, interacts with alpha-actinins ACTN1 and ACTN4, FLNA and MYH9. Interacts (via LIM zinc-binding domain) with MKRN2.

The protein localises to the cytoplasm. The protein resides in the cytoskeleton. Probable adapter protein located at the actin cytoskeleton that promotes cell attachment. Necessary for the migratory capacity of epithelial cells. Overexpression enhances cell adhesion to collagen and fibronectin and suppresses anchorage independent growth. May contribute to tumor cell migratory capacity. The sequence is that of PDZ and LIM domain protein 2 (PDLIM2) from Bos taurus (Bovine).